A 181-amino-acid chain; its full sequence is Oligoribonuclease (181 aa).

In terms of domain architecture, Exonuclease spans 8–171; the sequence is LIWVDLEMTG…EDIKESIAEM (164 aa). Residue Tyr129 is part of the active site.

The protein belongs to the oligoribonuclease family.

Its subcellular location is the cytoplasm. Its function is as follows. 3'-to-5' exoribonuclease specific for small oligoribonucleotides. This is Oligoribonuclease from Shewanella frigidimarina (strain NCIMB 400).